Consider the following 456-residue polypeptide: MTOR-associated protein MEAK7 (456 aa).

The N-myristoyl glycine moiety is linked to residue G2. One can recognise a TLDc domain in the interval 244–412; the sequence is SILDVLSVMY…FDKMEVWAVG (169 aa).

In terms of assembly, interacts (via C-terminal domain) with MTOR and MLST8; the interaction with MTOR increases upon nutrient stimulation.

It is found in the membrane. Its subcellular location is the cytoplasm. The protein localises to the lysosome. Functionally, activates an alternative mTOR signaling through RPS6KB2 activation and EIF4EBP1 repression to regulate cell proliferation and migration. Recruits MTOR at the lysosome, essential for MTOR signaling at the lysosome. The polypeptide is MTOR-associated protein MEAK7 (Homo sapiens (Human)).